A 251-amino-acid chain; its full sequence is CDP-diacylglycerol pyrophosphatase (251 aa).

Residues 4–24 (AGLLFLVMIVIAVVATGIGYW) traverse the membrane as a helical segment.

Belongs to the Cdh family.

It is found in the cell inner membrane. The catalysed reaction is a CDP-1,2-diacyl-sn-glycerol + H2O = a 1,2-diacyl-sn-glycero-3-phosphate + CMP + 2 H(+). It functions in the pathway phospholipid metabolism; CDP-diacylglycerol degradation; phosphatidate from CDP-diacylglycerol: step 1/1. This is CDP-diacylglycerol pyrophosphatase from Escherichia coli O45:K1 (strain S88 / ExPEC).